The primary structure comprises 147 residues: MFKIIVSFFCDHVFLSVIWLISCVLMIFFTLKDILFCTQFISIMKLIRCINYDRCLLIIDARTEKCFLKGHIINSVNIPYIDVKSVCNISVFKKYKNFSIVIVFKNDNQIDRNYVNFFKSIGCNKIYILRGGMNGWLSNNYPTVCLK.

Positions 52–145 (YDRCLLIIDA…WLSNNYPTVC (94 aa)) constitute a Rhodanese domain.

This is an uncharacterized protein from Buchnera aphidicola subsp. Baizongia pistaciae (strain Bp).